A 185-amino-acid polypeptide reads, in one-letter code: Prorelaxin 1 (185 aa).

The N-terminal stretch at 1–22 is a signal peptide; it reads MSSRFLLQLLGFWLLLSQPCRT. 3 disulfide bridges follow: Cys36–Cys171, Cys48–Cys185, and Cys170–Cys175. A propeptide spans 58–156 (connecting peptide); that stretch reads SQEEPALLAR…LKYLQSDTHS (99 aa). The segment at 135–161 is disordered; that stretch reads RLGEAEDGSPPGLKYLQSDTHSRKKRE.

The protein belongs to the insulin family. As to quaternary structure, heterodimer of a B chain and an A chain linked by two disulfide bonds.

The protein resides in the secreted. In terms of biological role, relaxin is an ovarian hormone that acts with estrogen to produce dilatation of the birth canal in many mammals. This is Prorelaxin 1 (Rln1) from Mus musculus (Mouse).